The primary structure comprises 275 residues: 2-dehydro-3-deoxyphosphooctonate aldolase (275 aa).

Belongs to the KdsA family.

The protein localises to the cytoplasm. It carries out the reaction D-arabinose 5-phosphate + phosphoenolpyruvate + H2O = 3-deoxy-alpha-D-manno-2-octulosonate-8-phosphate + phosphate. The protein operates within carbohydrate biosynthesis; 3-deoxy-D-manno-octulosonate biosynthesis; 3-deoxy-D-manno-octulosonate from D-ribulose 5-phosphate: step 2/3. It functions in the pathway bacterial outer membrane biogenesis; lipopolysaccharide biosynthesis. The polypeptide is 2-dehydro-3-deoxyphosphooctonate aldolase (Francisella tularensis subsp. mediasiatica (strain FSC147)).